The sequence spans 1225 residues: uncharacterized protein (1225 aa).

The N-terminal stretch at 1–27 (MKRFLHRVKWPLLLSSIAVSLGIVAVA) is a signal peptide. Cysteine 28 is lipidated: N-palmitoyl cysteine. Cysteine 28 carries the S-diacylglycerol cysteine lipid modification. The interval 995 to 1014 (QSEKSSSNGGQAQLQSTQSS) is disordered.

This sequence belongs to the MG307/MG309/MG338 family.

It is found in the cell membrane. This is an uncharacterized protein from Mycoplasma genitalium (strain ATCC 33530 / DSM 19775 / NCTC 10195 / G37) (Mycoplasmoides genitalium).